Here is a 962-residue protein sequence, read N- to C-terminus: Glycine dehydrogenase (decarboxylating) (962 aa).

An N6-(pyridoxal phosphate)lysine modification is found at Lys-709.

Belongs to the GcvP family. In terms of assembly, the glycine cleavage system is composed of four proteins: P, T, L and H. Requires pyridoxal 5'-phosphate as cofactor.

It carries out the reaction N(6)-[(R)-lipoyl]-L-lysyl-[glycine-cleavage complex H protein] + glycine + H(+) = N(6)-[(R)-S(8)-aminomethyldihydrolipoyl]-L-lysyl-[glycine-cleavage complex H protein] + CO2. In terms of biological role, the glycine cleavage system catalyzes the degradation of glycine. The P protein binds the alpha-amino group of glycine through its pyridoxal phosphate cofactor; CO(2) is released and the remaining methylamine moiety is then transferred to the lipoamide cofactor of the H protein. This Shewanella loihica (strain ATCC BAA-1088 / PV-4) protein is Glycine dehydrogenase (decarboxylating).